The sequence spans 173 residues: MIGFGWLEALLRVGRKLFVKPETQLYPEQKPKLYPRARGRIVLTRDPDGQERCVACNLCATVCPVGCIDLAKAVADDGRWYPEYFRVNFARCIFCGFCEDACPTAAIQLTPDYELSEWRRDALVYEKHDLLISGEGKVRGYRYWSVAGKAIPGKDKGEAEHEAPPVNLKGLLP.

2 consecutive 4Fe-4S ferredoxin-type domains span residues 41-73 (IVLTRDPDGQERCVACNLCATVCPVGCIDLAKA) and 83-112 (EYFRVNFARCIFCGFCEDACPTAAIQLTPD). The [4Fe-4S] cluster site is built by cysteine 53, cysteine 56, cysteine 59, cysteine 63, cysteine 92, cysteine 95, cysteine 98, and cysteine 102. Residues 153-163 (GKDKGEAEHEA) show a composition bias toward basic and acidic residues. The tract at residues 153–173 (GKDKGEAEHEAPPVNLKGLLP) is disordered.

The protein belongs to the complex I 23 kDa subunit family. NDH-1 is composed of 14 different subunits. Subunits NuoA, H, J, K, L, M, N constitute the membrane sector of the complex. The cofactor is [4Fe-4S] cluster.

Its subcellular location is the cell inner membrane. The catalysed reaction is a quinone + NADH + 5 H(+)(in) = a quinol + NAD(+) + 4 H(+)(out). Its function is as follows. NDH-1 shuttles electrons from NADH, via FMN and iron-sulfur (Fe-S) centers, to quinones in the respiratory chain. The immediate electron acceptor for the enzyme in this species is believed to be ubiquinone. Couples the redox reaction to proton translocation (for every two electrons transferred, four hydrogen ions are translocated across the cytoplasmic membrane), and thus conserves the redox energy in a proton gradient. This Rhodopseudomonas palustris (strain ATCC BAA-98 / CGA009) protein is NADH-quinone oxidoreductase subunit I 2.